We begin with the raw amino-acid sequence, 256 residues long: MARRPLVMGNWKLNGSKAFTKELIAGLKAELADVKGCDVAIAPPVMYLAEAEAALAGQSVIALGAQNVDVNVQGAFTGDISTEMLKDFGAKYIIIGHSERRTYHKECDTFIAKKFAALKAAGLVPVLCIGETEAENEAGQTEAVCAKQIDAVIDALGVEAFNGAVIAYEPIWAIGTGKSATPAQAQAVHAFIRGHIAAKSQAVADQVIIQYGGSVNDANAAELFTQPDIDGALVGGASLKAPAFAVIVKAAEKAKA.

Asn-10–Lys-12 contributes to the substrate binding site. His-97 serves as the catalytic Electrophile. The active-site Proton acceptor is the Glu-169. Substrate-binding positions include Gly-175, Ser-214, and Gly-235–Gly-236.

This sequence belongs to the triosephosphate isomerase family. Homodimer.

Its subcellular location is the cytoplasm. It carries out the reaction D-glyceraldehyde 3-phosphate = dihydroxyacetone phosphate. It functions in the pathway carbohydrate biosynthesis; gluconeogenesis. It participates in carbohydrate degradation; glycolysis; D-glyceraldehyde 3-phosphate from glycerone phosphate: step 1/1. In terms of biological role, involved in the gluconeogenesis. Catalyzes stereospecifically the conversion of dihydroxyacetone phosphate (DHAP) to D-glyceraldehyde-3-phosphate (G3P). The protein is Triosephosphate isomerase of Actinobacillus pleuropneumoniae serotype 7 (strain AP76).